A 524-amino-acid polypeptide reads, in one-letter code: Leucine-rich repeat-containing protein 1 (524 aa).

17 LRR repeats span residues 11 to 34, 35 to 58, 60 to 81, 83 to 105, 107 to 126, 127 to 149, 150 to 172, 173 to 196, 198 to 218, 219 to 242, 244 to 264, 265 to 288, 290 to 310, 311 to 334, 336 to 356, 357 to 380, and 382 to 405; these read NRHV…IYRY, ARSL…FFQL, KLRK…IANF, QLVE…AFCK, LQVA…SFPE, LQNL…NIGN, LYNL…SLTQ, LRRL…IGAL, HLKD…EIGN, LKNL…ISGL, SLTY…GIGK, LKKL…IGDC, NLTE…SIGK, LKKL…IGGC, SLTM…EVSQ, AVEL…LTTL, and LKAL…IDRA. Positions 456–512 form a coiled coil; sequence SAIRFLEDEKDEDENETRTLQRRATPHPGELKNMKKTVENLRNDMNAAKGLDSNKNE. The interval 464–485 is disordered; the sequence is EKDEDENETRTLQRRATPHPGE. The residue at position 480 (threonine 480) is a Phosphothreonine.

As to quaternary structure, interacts with DLG1. May form a complex with DLG1 and ERBIN, where interaction between LRRC1 and ERBIN is indirect.

Its subcellular location is the cytoplasm. The protein resides in the membrane. The protein is Leucine-rich repeat-containing protein 1 (Lrrc1) of Mus musculus (Mouse).